The following is a 407-amino-acid chain: Patatin-like protein 2 (407 aa).

One can recognise a PNPLA domain in the interval L22–I228. Residues G26–G31 carry the GXGXXG motif. The GXSXG motif lies at G64–G68. S66 serves as the catalytic Nucleophile. D215 acts as the Proton acceptor in catalysis. The short motif at D215–G217 is the DGA/G element. Phosphoserine is present on S398.

The protein belongs to the patatin family. As to expression, expressed specifically in roots.

Its subcellular location is the cytoplasm. In terms of biological role, possesses non-specific lipolytic acyl hydrolase (LAH) activity. Catalyzes the hydrolysis of the galactolipids monogalactosyldiacylglycerol (MGDG) and digalactosyldiacylglycerol (DGDG), and less efficiently the phoshpolipids phosphatidylcholine (PC), phosphatidylethanolamine (PE), phosphatidylglycerol (PG), phosphatidic acid (PA), phosphatidylserine (PS) and phosphatidylinositol (PI). Favors the release of fatty acid at the sn-1 position for PC or PE and the sn-2 position for PG, PA, PS and PI. Negatively affects disease resistance to the necrotic fungal pathogen Botrytis cinerea and the avirulent bacteria Pseudomonas syringae by promoting cell death and reducing the efficiency of the hypersensitive response, respectively. However, PLP2 contributes to resistance to cucumber mosaic virus (CMV), an obligate parasite inducing hypersensitive response. May negatively regulate oxylipin production, possibly via participating in membrane repair that includes removal of oxidatively modified lipids. This Arabidopsis thaliana (Mouse-ear cress) protein is Patatin-like protein 2 (PLP2).